The sequence spans 328 residues: Lytic polysaccharide monooxygenase aasB (328 aa).

An N-terminal signal peptide occupies residues 1–18 (MKAFFAISASTLLATVHG). His-19 contacts Cu(2+). Cys-40 and Cys-43 are oxidised to a cystine. Asn-54 carries N-linked (GlcNAc...) asparagine glycosylation. Disulfide bonds link Cys-66/Cys-245, Cys-102/Cys-203, Cys-118/Cys-145, Cys-153/Cys-161, Cys-167/Cys-173, and Cys-181/Cys-192. His-109 is a Cu(2+) binding site. A Cu(2+)-binding site is contributed by Tyr-242. An N-linked (GlcNAc...) asparagine glycan is attached at Asn-306.

Belongs to the polysaccharide monooxygenase AA13 family. The cofactor is Cu(2+).

The protein resides in the secreted. The enzyme catalyses starch + reduced acceptor + O2 = D-glucono-1,5-lactone-terminated malto-oligosaccharides + short-chain malto-oligosaccharides + acceptor + H2O.. In terms of biological role, lytic polysaccharide monooxygenase involved in breakdown of granular resistant starch. The polypeptide is Lytic polysaccharide monooxygenase aasB (Emericella nidulans (strain FGSC A4 / ATCC 38163 / CBS 112.46 / NRRL 194 / M139) (Aspergillus nidulans)).